A 556-amino-acid chain; its full sequence is MKSDVEIAQAATMQPIHKIAEKLGLNADQIEQYGKYKAKINPTDAFKLPAKNGKLILVTAINPTPAGEGKTTVTIGLTDALNQLGKNAVVAAREPSLGPVFGVKGGAAGGGYAQVLPMEDINLHFTGDFHAITSANNLLAALLDNHIYQGNALNIDTKRVLWRRVIDMNDRQLRNVLGGLGNPTDGVIRPDGFDITVASEVMAIFCLAKDLADLKTRLGNILVAYTKDKQPVYAKDLNAHGAMAALLKDAIKPNLVQTIEGSPAFIHGGPFANIAHGCNSVTATRLALHLGDYAVTEAGFGADLGAEKFCDIKCRLADLKPDVAVVVATVKALKYNGGVEKANLAEENLTALQQGLPNLLKHISNLKNVFGLPVVVALNRFVSDTDAELALIQTACAKQGVEVSLTEVWGKGGAGGVDLAQKVLKAIDEQENRFNFVYDVNESVQNKIKAIAQKIYGADDVNFSAEALAEIKNLEKLGLDKLPICMAKTQYSLSDNAKLLGCPSGFTVTVRSISVSAGAGFIVAICGSIMRMPGLPKVPAANRIDVDENGLITGLF.

64-71 (TPAGEGKT) serves as a coordination point for ATP.

It belongs to the formate--tetrahydrofolate ligase family.

It catalyses the reaction (6S)-5,6,7,8-tetrahydrofolate + formate + ATP = (6R)-10-formyltetrahydrofolate + ADP + phosphate. It participates in one-carbon metabolism; tetrahydrofolate interconversion. The chain is Formate--tetrahydrofolate ligase from Actinobacillus pleuropneumoniae serotype 5b (strain L20).